We begin with the raw amino-acid sequence, 407 residues long: Probable protein S-acyltransferase 9 (407 aa).

The next 2 membrane-spanning stretches (helical) occupy residues 28–48 (WSIPFTFLLIITPVCFFSVFV) and 62–82 (GHVFLVAGVLFTVFVLILLFL). A DHHC domain is found at 136 to 179 (KYCDTCMLYRPPRCSHCSICNNCVERFDHHCPWRNYRYFFMFVS). Residue C166 is the S-palmitoyl cysteine intermediate of the active site. 2 helical membrane passes run 174 to 194 (FFMFVSSATILCIYIFSMSAL) and 217 to 237 (AVMLMIYCFISLWFVGGLTGF). The segment at 300-407 (LATTWERPEE…RSYAAAEEGR (108 aa)) is disordered. Residues 346–356 (DTAHHKIDIDQ) are compositionally biased toward basic and acidic residues.

It belongs to the DHHC palmitoyltransferase family. Mainly expressed in seeds.

It localises to the cell membrane. It catalyses the reaction L-cysteinyl-[protein] + hexadecanoyl-CoA = S-hexadecanoyl-L-cysteinyl-[protein] + CoA. Palmitoyl acyltransferase. This is Probable protein S-acyltransferase 9 (PAT09) from Arabidopsis thaliana (Mouse-ear cress).